A 436-amino-acid chain; its full sequence is NADH-quinone oxidoreductase subunit D 1 (436 aa).

It belongs to the complex I 49 kDa subunit family. NDH-1 is composed of 14 different subunits. Subunits NuoB, C, D, E, F, and G constitute the peripheral sector of the complex.

The protein localises to the cell inner membrane. The enzyme catalyses a quinone + NADH + 5 H(+)(in) = a quinol + NAD(+) + 4 H(+)(out). Functionally, NDH-1 shuttles electrons from NADH, via FMN and iron-sulfur (Fe-S) centers, to quinones in the respiratory chain. The immediate electron acceptor for the enzyme in this species is believed to be ubiquinone. Couples the redox reaction to proton translocation (for every two electrons transferred, four hydrogen ions are translocated across the cytoplasmic membrane), and thus conserves the redox energy in a proton gradient. In Stenotrophomonas maltophilia (strain R551-3), this protein is NADH-quinone oxidoreductase subunit D 1.